The chain runs to 461 residues: Metacaspase-1 (461 aa).

Composition is skewed to gly residues over residues 1–21 (MSYP…GYGG), 45–66 (QYGG…GYGP), 74–86 (QYGG…GYGP), and 105–119 (PGGQ…GHPG). The segment at 1–154 (MSYPGQGGNT…PQGNQAFGGT (154 aa)) is disordered. Composition is skewed to low complexity over residues 121–131 (GNQAPPGQYGQ) and 138–148 (HGNHNMPPQGN). Residues H252 and C308 contribute to the active site.

Belongs to the peptidase C14B family.

Involved in cell death (apoptosis). This chain is Metacaspase-1 (MCA1), found in Yarrowia lipolytica (strain CLIB 122 / E 150) (Yeast).